The chain runs to 250 residues: 3-deoxy-manno-octulosonate cytidylyltransferase (250 aa).

This sequence belongs to the KdsB family.

The protein resides in the cytoplasm. It catalyses the reaction 3-deoxy-alpha-D-manno-oct-2-ulosonate + CTP = CMP-3-deoxy-beta-D-manno-octulosonate + diphosphate. Its pathway is nucleotide-sugar biosynthesis; CMP-3-deoxy-D-manno-octulosonate biosynthesis; CMP-3-deoxy-D-manno-octulosonate from 3-deoxy-D-manno-octulosonate and CTP: step 1/1. It functions in the pathway bacterial outer membrane biogenesis; lipopolysaccharide biosynthesis. In terms of biological role, activates KDO (a required 8-carbon sugar) for incorporation into bacterial lipopolysaccharide in Gram-negative bacteria. The polypeptide is 3-deoxy-manno-octulosonate cytidylyltransferase (Francisella tularensis subsp. holarctica (strain FTNF002-00 / FTA)).